Reading from the N-terminus, the 184-residue chain is MKSLLLLTTLLIPLHLGMAWSAKYAVDCPEHCDNTECRSSLRCKRTVLDDCGCCQVCAAGPGETCYRTVSGMDGVKCGPGLKCHFYSEEDDFGDEFGVCKDCPYGTFGMDCKETCNCQSGICDRVTGRCLDFPFFQYAAAKSPSRTSASQTERDAASGDGNAVREEIGDRNAARPSVMKWLNPR.

Positions 1–21 (MKSLLLLTTLLIPLHLGMAWS) are cleaved as a signal peptide. Residues 24 to 102 (YAVDCPEHCD…GDEFGVCKDC (79 aa)) form the IGFBP N-terminal domain. Cystine bridges form between Cys28–Cys51, Cys32–Cys53, Cys37–Cys54, Cys43–Cys57, Cys65–Cys83, and Cys77–Cys99. The disordered stretch occupies residues 145–184 (RTSASQTERDAASGDGNAVREEIGDRNAARPSVMKWLNPR). Positions 151–172 (TERDAASGDGNAVREEIGDRNA) are enriched in basic and acidic residues. Ser157 carries O-linked (Xyl...) (chondroitin sulfate) serine glycosylation.

Post-translationally, O-glycosylated; contains chondroitin sulfate and dermatan sulfate. As to expression, pineal gland specific.

Its subcellular location is the secreted. Its function is as follows. Involved in angiogenesis; promotes angiogenic sprouting. May have potent implications in lung endothelial cell-leukocyte interactions. The chain is Endothelial cell-specific molecule 1 (Esm1) from Rattus norvegicus (Rat).